We begin with the raw amino-acid sequence, 859 residues long: Kinesin-like protein KIN-14T (859 aa).

Residues 91-411 (NIRVFCRVKP…LNFATRAKNI (321 aa)) form the Kinesin motor domain. 168–175 (GQTGTGKT) serves as a coordination point for ATP. Residues 422–463 (QAKKEAVMMNLQKMMEKIEQEREMSLRKMRNLNETLEKLTGK) adopt a coiled-coil conformation. Positions 511–530 (LSGADFSVTPNSSSFKSRRN) are disordered. The span at 518-530 (VTPNSSSFKSRRN) shows a compositional bias: polar residues.

The protein belongs to the TRAFAC class myosin-kinesin ATPase superfamily. Kinesin family. KIN-14 subfamily.

The sequence is that of Kinesin-like protein KIN-14T from Arabidopsis thaliana (Mouse-ear cress).